We begin with the raw amino-acid sequence, 192 residues long: A-type ATP synthase subunit E (192 aa).

The tract at residues 1 to 66 (MSLDTVVEDI…QERDQKLSSA (66 aa)) is disordered. Positions 8 to 26 (EDIRDEARARADEIRSEGE) are enriched in basic and acidic residues. Residues 27–49 (ERAEEIIDEAEREADDIVDEAER) show a composition bias toward acidic residues. Over residues 50-66 (EAERKISQERDQKLSSA) the composition is skewed to basic and acidic residues.

Belongs to the V-ATPase E subunit family. Has multiple subunits with at least A(3), B(3), C, D, E, F, H, I and proteolipid K(x).

The protein localises to the cell membrane. Its function is as follows. Component of the A-type ATP synthase that produces ATP from ADP in the presence of a proton gradient across the membrane. The protein is A-type ATP synthase subunit E of Natronomonas pharaonis (strain ATCC 35678 / DSM 2160 / CIP 103997 / JCM 8858 / NBRC 14720 / NCIMB 2260 / Gabara) (Halobacterium pharaonis).